A 143-amino-acid polypeptide reads, in one-letter code: Large ribosomal subunit protein uL13 (143 aa).

Belongs to the universal ribosomal protein uL13 family. In terms of assembly, part of the 50S ribosomal subunit.

In terms of biological role, this protein is one of the early assembly proteins of the 50S ribosomal subunit, although it is not seen to bind rRNA by itself. It is important during the early stages of 50S assembly. This is Large ribosomal subunit protein uL13 from Geobacter sulfurreducens (strain ATCC 51573 / DSM 12127 / PCA).